Consider the following 302-residue polypeptide: Aspartate carbamoyltransferase catalytic subunit (302 aa).

Arginine 53 and threonine 54 together coordinate carbamoyl phosphate. Lysine 82 serves as a coordination point for L-aspartate. Residues arginine 103, histidine 131, and glutamine 134 each coordinate carbamoyl phosphate. L-aspartate is bound by residues arginine 164 and arginine 223. The carbamoyl phosphate site is built by leucine 260 and proline 261.

Belongs to the aspartate/ornithine carbamoyltransferase superfamily. ATCase family. As to quaternary structure, heterooligomer of catalytic and regulatory chains.

The catalysed reaction is carbamoyl phosphate + L-aspartate = N-carbamoyl-L-aspartate + phosphate + H(+). Its pathway is pyrimidine metabolism; UMP biosynthesis via de novo pathway; (S)-dihydroorotate from bicarbonate: step 2/3. Catalyzes the condensation of carbamoyl phosphate and aspartate to form carbamoyl aspartate and inorganic phosphate, the committed step in the de novo pyrimidine nucleotide biosynthesis pathway. This Methanococcus maripaludis (strain C5 / ATCC BAA-1333) protein is Aspartate carbamoyltransferase catalytic subunit.